A 288-amino-acid polypeptide reads, in one-letter code: Peptidyl-tRNA hydrolase, chloroplastic (288 aa).

Residues 1 to 55 constitute a chloroplast transit peptide; that stretch reads MKAVAFPAKIANLSFPSNCCSLFFRSPATFLSPALPCRKLTKGIRGLEGLMSQCL. Y107 provides a ligand contact to tRNA. H112 (proton acceptor) is an active-site residue. TRNA-binding residues include F157, N159, and N205.

It belongs to the PTH family. Monomer.

It localises to the plastid. Its subcellular location is the chloroplast stroma. The catalysed reaction is an N-acyl-L-alpha-aminoacyl-tRNA + H2O = an N-acyl-L-amino acid + a tRNA + H(+). The natural substrate for this enzyme may be peptidyl-tRNAs which drop off the ribosome during protein synthesis. The protein is Peptidyl-tRNA hydrolase, chloroplastic of Arabidopsis thaliana (Mouse-ear cress).